Consider the following 203-residue polypeptide: Putative zinc finger protein 876 (203 aa).

C2H2-type zinc fingers lie at residues 63–85, 91–113, 119–141, and 147–169; these read YTCEECGKAFYRSSHLTEHKNIH, YKCEECGNAFYRSSHLTKHKRIH, YKCEECGKAFRQSSALNEHKKIH, and YKCKECGKAFRWSRSLNEHTNIH. The segment at 175–197 adopts a C2H2-type 5; degenerate zinc-finger fold; sequence YTCEECGKDFTWSSTLTVHQRIQ.

It belongs to the krueppel C2H2-type zinc-finger protein family.

The protein resides in the nucleus. In terms of biological role, may be involved in transcriptional regulation. This Homo sapiens (Human) protein is Putative zinc finger protein 876 (ZNF876P).